The primary structure comprises 368 residues: Transcription factor TGA1 (368 aa).

Residues 53-65 are compositionally biased toward polar residues; the sequence is LDNNVSEDTSHGT. The tract at residues 53–83 is disordered; the sequence is LDNNVSEDTSHGTAGTPHMFDQEASTSRHPD. The region spanning 82-145 is the bZIP domain; that stretch reads PDKIQRRLAQ…NGIDTNSLGF (64 aa). Coiled-coil stretches lie at residues 83–131 and 261–281; these read DKIQ…RQQG and NLKQ…EKLQ. The interval 84–104 is basic motif; that stretch reads KIQRRLAQNREAARKSRLRKK. A leucine-zipper region spans residues 110 to 124; sequence LETSRLKLIQLEQEL. Positions 153–363 constitute a DOG1 domain; that stretch reads IAAFEMEYGH…RALSSSWATR (211 aa). A disulfide bridge links Cys260 with Cys266.

The protein belongs to the bZIP family. As to quaternary structure, binds DNA as a dimer. The reduced form interacts with NPR1. Predominantly expressed in roots.

Its subcellular location is the nucleus. Its function is as follows. Transcriptional activator that binds specifically to the DNA sequence 5'-TGACG-3'. Recognizes ocs elements like the as-1 motif of the cauliflower mosaic virus 35S promoter. Binding to the as-1-like cis elements mediate auxin- and salicylic acid-inducible transcription. May be involved in the induction of the systemic acquired resistance (SAR) via its interaction with NPR1. Could also bind to the Hex-motif (5'-TGACGTGG-3') another cis-acting element found in plant histone promoters. This is Transcription factor TGA1 (TGA1) from Arabidopsis thaliana (Mouse-ear cress).